The sequence spans 229 residues: ATP-dependent Clp protease proteolytic subunit (229 aa).

Catalysis depends on Ser-101, which acts as the Nucleophile. Residue His-126 is part of the active site.

This sequence belongs to the peptidase S14 family. In terms of assembly, component of the chloroplastic Clp protease core complex.

The protein localises to the plastid. Its subcellular location is the chloroplast stroma. The enzyme catalyses Hydrolysis of proteins to small peptides in the presence of ATP and magnesium. alpha-casein is the usual test substrate. In the absence of ATP, only oligopeptides shorter than five residues are hydrolyzed (such as succinyl-Leu-Tyr-|-NHMec, and Leu-Tyr-Leu-|-Tyr-Trp, in which cleavage of the -Tyr-|-Leu- and -Tyr-|-Trp bonds also occurs).. Functionally, cleaves peptides in various proteins in a process that requires ATP hydrolysis. Has a chymotrypsin-like activity. Plays a major role in the degradation of misfolded proteins. The sequence is that of ATP-dependent Clp protease proteolytic subunit from Mesostigma viride (Green alga).